The sequence spans 150 residues: Helix-loop-helix protein hlh-12 (150 aa).

Residues 1 to 24 (MAKKPRVTKLNTDRRSRANERERQ) form a disordered region. Over residues 11-24 (NTDRRSRANERERQ) the composition is skewed to basic and acidic residues. The tract at residues 13–26 (DRRSRANERERQRV) is basic motif. The bHLH domain occupies 13-65 (DRRSRANERERQRVSEMNGMFDVLLNLLPPSHFKTRLSRVQILREATSYIIRL). Residues 27–65 (SEMNGMFDVLLNLLPPSHFKTRLSRVQILREATSYIIRL) are helix-loop-helix motif.

As to quaternary structure, forms a heterodimer with helix-loop-helix protein hlh-2.

Its subcellular location is the nucleus. Functionally, transcription factor which binds the E box motif 5'-GCAGGTG-3'. Involved in migration of the gonadal leader cells; distal tip cells (DTCs) in hermaphrodites, and linker cells in males. Positively regulates expression of alpha integrin ina-1 and ADAMTS protease gon-1. In Caenorhabditis elegans, this protein is Helix-loop-helix protein hlh-12.